Reading from the N-terminus, the 281-residue chain is HTH-type transcriptional activator RamA (281 aa).

The HTH luxR-type domain occupies 213–278 (RIKQTTKLSA…EAVNAARRIG (66 aa)).

Its function is as follows. RamA is a master regulator of acetate metabolism. It positively controls the expression of acnA, aceA, aceB, ack, pta and ramB genes in the presence of acetate. RamA is also a positive regulator of rpf2 gene expression during growth on glucose as the sole carbon source. In Corynebacterium glutamicum (strain ATCC 13032 / DSM 20300 / JCM 1318 / BCRC 11384 / CCUG 27702 / LMG 3730 / NBRC 12168 / NCIMB 10025 / NRRL B-2784 / 534), this protein is HTH-type transcriptional activator RamA.